Here is a 484-residue protein sequence, read N- to C-terminus: ATP synthase subunit beta (484 aa).

168-175 (GGAGVGKT) contributes to the ATP binding site.

This sequence belongs to the ATPase alpha/beta chains family. As to quaternary structure, F-type ATPases have 2 components, CF(1) - the catalytic core - and CF(0) - the membrane proton channel. CF(1) has five subunits: alpha(3), beta(3), gamma(1), delta(1), epsilon(1). CF(0) has three main subunits: a(1), b(2) and c(9-12). The alpha and beta chains form an alternating ring which encloses part of the gamma chain. CF(1) is attached to CF(0) by a central stalk formed by the gamma and epsilon chains, while a peripheral stalk is formed by the delta and b chains.

The protein resides in the cell membrane. It catalyses the reaction ATP + H2O + 4 H(+)(in) = ADP + phosphate + 5 H(+)(out). In terms of biological role, produces ATP from ADP in the presence of a proton gradient across the membrane. The catalytic sites are hosted primarily by the beta subunits. The polypeptide is ATP synthase subunit beta (Pseudarthrobacter chlorophenolicus (strain ATCC 700700 / DSM 12829 / CIP 107037 / JCM 12360 / KCTC 9906 / NCIMB 13794 / A6) (Arthrobacter chlorophenolicus)).